A 137-amino-acid chain; its full sequence is uncharacterized protein (137 aa).

This is an uncharacterized protein from Homo sapiens (Human).